Reading from the N-terminus, the 170-residue chain is Ubiquitin-conjugating enzyme E2 G1 (170 aa).

At Met-1 the chain carries N-acetylmethionine. Residue Thr-2 is modified to N-acetylthreonine; in Ubiquitin-conjugating enzyme E2 G1, N-terminally processed. The UBC core domain occupies 5–166 (QSALLLRRQL…VARCVRKSQE (162 aa)). Cys-90 functions as the Glycyl thioester intermediate in the catalytic mechanism.

It belongs to the ubiquitin-conjugating enzyme family. Autoubiquitinated in vitro. In terms of tissue distribution, widely expressed, mainly in skeletal muscle.

It catalyses the reaction S-ubiquitinyl-[E1 ubiquitin-activating enzyme]-L-cysteine + [E2 ubiquitin-conjugating enzyme]-L-cysteine = [E1 ubiquitin-activating enzyme]-L-cysteine + S-ubiquitinyl-[E2 ubiquitin-conjugating enzyme]-L-cysteine.. It participates in protein modification; protein ubiquitination. Its function is as follows. Accepts ubiquitin from the E1 complex and catalyzes its covalent attachment to other proteins. In vitro catalyzes 'Lys-48'-, as well as 'Lys-63'-linked polyubiquitination. May be involved in degradation of muscle-specific proteins. Mediates polyubiquitination of CYP3A4. In Homo sapiens (Human), this protein is Ubiquitin-conjugating enzyme E2 G1 (UBE2G1).